The primary structure comprises 248 residues: Proteasome subunit alpha type-5 (248 aa).

It belongs to the peptidase T1A family. The 26S proteasome consists of a 20S proteasome core and two 19S regulatory subunits. The 20S proteasome core is composed of 28 subunits that are arranged in four stacked rings, resulting in a barrel-shaped structure. The two end rings are each formed by seven alpha subunits, and the two central rings are each formed by seven beta subunits. The catalytic chamber with the active sites is on the inside of the barrel.

The protein resides in the cytoplasm. The protein localises to the nucleus. The proteasome is a multicatalytic proteinase complex which is characterized by its ability to cleave peptides with Arg, Phe, Tyr, Leu, and Glu adjacent to the leaving group at neutral or slightly basic pH. The proteasome has an ATP-dependent proteolytic activity. The chain is Proteasome subunit alpha type-5 (pas-5) from Caenorhabditis elegans.